Reading from the N-terminus, the 623-residue chain is tRNA uridine 5-carboxymethylaminomethyl modification enzyme MnmG (623 aa).

Residues 11-16 (GAGHAG), Val-123, and Ser-178 each bind FAD. An NAD(+)-binding site is contributed by 270–284 (GPRYCPSIETKIVTF). Gln-367 is an FAD binding site.

The protein belongs to the MnmG family. As to quaternary structure, homodimer. Heterotetramer of two MnmE and two MnmG subunits. It depends on FAD as a cofactor.

Its subcellular location is the cytoplasm. Functionally, NAD-binding protein involved in the addition of a carboxymethylaminomethyl (cmnm) group at the wobble position (U34) of certain tRNAs, forming tRNA-cmnm(5)s(2)U34. The protein is tRNA uridine 5-carboxymethylaminomethyl modification enzyme MnmG of Phocaeicola vulgatus (strain ATCC 8482 / DSM 1447 / JCM 5826 / CCUG 4940 / NBRC 14291 / NCTC 11154) (Bacteroides vulgatus).